Consider the following 203-residue polypeptide: FMN-dependent NADH:quinone oxidoreductase (203 aa).

FMN contacts are provided by residues S9, 15 to 17 (SVS), and 138 to 141 (SRGG).

The protein belongs to the azoreductase type 1 family. Homodimer. Requires FMN as cofactor.

The catalysed reaction is 2 a quinone + NADH + H(+) = 2 a 1,4-benzosemiquinone + NAD(+). It carries out the reaction N,N-dimethyl-1,4-phenylenediamine + anthranilate + 2 NAD(+) = 2-(4-dimethylaminophenyl)diazenylbenzoate + 2 NADH + 2 H(+). Functionally, quinone reductase that provides resistance to thiol-specific stress caused by electrophilic quinones. Also exhibits azoreductase activity. Catalyzes the reductive cleavage of the azo bond in aromatic azo compounds to the corresponding amines. This Methylorubrum extorquens (strain CM4 / NCIMB 13688) (Methylobacterium extorquens) protein is FMN-dependent NADH:quinone oxidoreductase.